We begin with the raw amino-acid sequence, 445 residues long: tRNA modification GTPase MnmE (445 aa).

Residues Arg20, Glu79, and Lys119 each coordinate (6S)-5-formyl-5,6,7,8-tetrahydrofolate. Residues 215–371 enclose the TrmE-type G domain; the sequence is GLKLAIIGPP…ILKNIEEIAE (157 aa). Asn225 provides a ligand contact to K(+). Residues 225–230, 244–250, and 269–272 each bind GTP; these read NAGKSS, SNIAGTT, and DTAG. Residue Ser229 coordinates Mg(2+). 3 residues coordinate K(+): Ser244, Ile246, and Thr249. Mg(2+) is bound at residue Thr250. (6S)-5-formyl-5,6,7,8-tetrahydrofolate is bound at residue Lys445.

It belongs to the TRAFAC class TrmE-Era-EngA-EngB-Septin-like GTPase superfamily. TrmE GTPase family. In terms of assembly, homodimer. Heterotetramer of two MnmE and two MnmG subunits. It depends on K(+) as a cofactor.

It is found in the cytoplasm. Functionally, exhibits a very high intrinsic GTPase hydrolysis rate. Involved in the addition of a carboxymethylaminomethyl (cmnm) group at the wobble position (U34) of certain tRNAs, forming tRNA-cmnm(5)s(2)U34. This Rickettsia bellii (strain OSU 85-389) protein is tRNA modification GTPase MnmE.